Consider the following 329-residue polypeptide: MVKTQRVVITPGEPAGIGPDLVVQLAQREWPVELVVCADTTLLTDRAAMLGLPLTLRPYSPNSPAQPQTTGTLTLLPVALRESVTAGQLAIENGHYVVETLARACDGCLNGEFAALITGPVHKGVINDAGIPFTGHTEFFEERSQAKKVVMMLATEELRVALATTHLPLRDIADAITPALLHEVIAILHHDLRTKFGIAEPRILVCGLNPHAGEGGHMGTEEIDTIIPVLDELRAQGMKLNGPLPADTLFQPKYLDNADAVLAMYHDQGLPVLKYQGFGRGVNITLGLPFIRTSVDHGTALELAGRGEADVGSFITALNLAIKMIVNTQ.

2 residues coordinate substrate: histidine 136 and threonine 137. Residues histidine 166, histidine 211, and histidine 266 each coordinate a divalent metal cation. The substrate site is built by lysine 274, asparagine 283, and arginine 292.

This sequence belongs to the PdxA family. In terms of assembly, homodimer. Requires Zn(2+) as cofactor. Mg(2+) is required as a cofactor. It depends on Co(2+) as a cofactor.

It localises to the cytoplasm. The catalysed reaction is 4-(phosphooxy)-L-threonine + NAD(+) = 3-amino-2-oxopropyl phosphate + CO2 + NADH. It participates in cofactor biosynthesis; pyridoxine 5'-phosphate biosynthesis; pyridoxine 5'-phosphate from D-erythrose 4-phosphate: step 4/5. Its function is as follows. Catalyzes the NAD(P)-dependent oxidation of 4-(phosphooxy)-L-threonine (HTP) into 2-amino-3-oxo-4-(phosphooxy)butyric acid which spontaneously decarboxylates to form 3-amino-2-oxopropyl phosphate (AHAP). The protein is 4-hydroxythreonine-4-phosphate dehydrogenase of Escherichia coli (strain SE11).